A 274-amino-acid chain; its full sequence is Dermonecrotic toxin SdSicTox-betaIIB1bx (274 aa).

Residue His5 is part of the active site. Mg(2+)-binding residues include Glu25 and Asp27. Catalysis depends on His41, which acts as the Nucleophile. Intrachain disulfides connect Cys45–Cys51 and Cys47–Cys190. Asp85 is a binding site for Mg(2+).

It belongs to the arthropod phospholipase D family. Class II subfamily. It depends on Mg(2+) as a cofactor. As to expression, expressed by the venom gland.

It localises to the secreted. The catalysed reaction is an N-(acyl)-sphingosylphosphocholine = an N-(acyl)-sphingosyl-1,3-cyclic phosphate + choline. It catalyses the reaction an N-(acyl)-sphingosylphosphoethanolamine = an N-(acyl)-sphingosyl-1,3-cyclic phosphate + ethanolamine. It carries out the reaction a 1-acyl-sn-glycero-3-phosphocholine = a 1-acyl-sn-glycero-2,3-cyclic phosphate + choline. The enzyme catalyses a 1-acyl-sn-glycero-3-phosphoethanolamine = a 1-acyl-sn-glycero-2,3-cyclic phosphate + ethanolamine. Functionally, dermonecrotic toxins cleave the phosphodiester linkage between the phosphate and headgroup of certain phospholipids (sphingolipid and lysolipid substrates), forming an alcohol (often choline) and a cyclic phosphate. This toxin acts on sphingomyelin (SM). It may also act on ceramide phosphoethanolamine (CPE), lysophosphatidylcholine (LPC) and lysophosphatidylethanolamine (LPE), but not on lysophosphatidylserine (LPS), and lysophosphatidylglycerol (LPG). It acts by transphosphatidylation, releasing exclusively cyclic phosphate products as second products. Induces dermonecrosis, hemolysis, increased vascular permeability, edema, inflammatory response, and platelet aggregation. The polypeptide is Dermonecrotic toxin SdSicTox-betaIIB1bx (Sicarius cf. damarensis (strain GJB-2008) (Six-eyed sand spider)).